Here is a 950-residue protein sequence, read N- to C-terminus: Glycine dehydrogenase (decarboxylating) (950 aa).

Lysine 698 is modified (N6-(pyridoxal phosphate)lysine).

Belongs to the GcvP family. As to quaternary structure, the glycine cleavage system is composed of four proteins: P, T, L and H. Pyridoxal 5'-phosphate is required as a cofactor.

The enzyme catalyses N(6)-[(R)-lipoyl]-L-lysyl-[glycine-cleavage complex H protein] + glycine + H(+) = N(6)-[(R)-S(8)-aminomethyldihydrolipoyl]-L-lysyl-[glycine-cleavage complex H protein] + CO2. In terms of biological role, the glycine cleavage system catalyzes the degradation of glycine. The P protein binds the alpha-amino group of glycine through its pyridoxal phosphate cofactor; CO(2) is released and the remaining methylamine moiety is then transferred to the lipoamide cofactor of the H protein. The sequence is that of Glycine dehydrogenase (decarboxylating) from Neisseria gonorrhoeae (strain ATCC 700825 / FA 1090).